Reading from the N-terminus, the 309-residue chain is Putative HTH-type transcriptional regulatory protein AF_1787 (309 aa).

In terms of domain architecture, HTH cro/C1-type spans 131–185 (IREARERLGLSVGDMAKMLGVSRRTVKKYEEGTDTTLSTAAKIEEIIGTFAIKEI). The H-T-H motif DNA-binding region spans 142–161 (VGDMAKMLGVSRRTVKKYEE).

The chain is Putative HTH-type transcriptional regulatory protein AF_1787 from Archaeoglobus fulgidus (strain ATCC 49558 / DSM 4304 / JCM 9628 / NBRC 100126 / VC-16).